We begin with the raw amino-acid sequence, 466 residues long: ATP synthase subunit beta (466 aa).

148–155 is a binding site for ATP; that stretch reads GGAGVGKT.

Belongs to the ATPase alpha/beta chains family. As to quaternary structure, F-type ATPases have 2 components, CF(1) - the catalytic core - and CF(0) - the membrane proton channel. CF(1) has five subunits: alpha(3), beta(3), gamma(1), delta(1), epsilon(1). CF(0) has three main subunits: a(1), b(2) and c(9-12). The alpha and beta chains form an alternating ring which encloses part of the gamma chain. CF(1) is attached to CF(0) by a central stalk formed by the gamma and epsilon chains, while a peripheral stalk is formed by the delta and b chains.

The protein resides in the cell inner membrane. The catalysed reaction is ATP + H2O + 4 H(+)(in) = ADP + phosphate + 5 H(+)(out). Its function is as follows. Produces ATP from ADP in the presence of a proton gradient across the membrane. The catalytic sites are hosted primarily by the beta subunits. This Herminiimonas arsenicoxydans protein is ATP synthase subunit beta.